The following is a 122-amino-acid chain: Ribonuclease P protein component (122 aa).

Belongs to the RnpA family. As to quaternary structure, consists of a catalytic RNA component (M1 or rnpB) and a protein subunit.

It carries out the reaction Endonucleolytic cleavage of RNA, removing 5'-extranucleotides from tRNA precursor.. Functionally, RNaseP catalyzes the removal of the 5'-leader sequence from pre-tRNA to produce the mature 5'-terminus. It can also cleave other RNA substrates such as 4.5S RNA. The protein component plays an auxiliary but essential role in vivo by binding to the 5'-leader sequence and broadening the substrate specificity of the ribozyme. The sequence is that of Ribonuclease P protein component from Lactobacillus johnsonii (strain CNCM I-12250 / La1 / NCC 533).